The primary structure comprises 175 residues: ATP synthase subunit b (175 aa).

Residues L24–W44 form a helical membrane-spanning segment.

It belongs to the ATPase B chain family. In terms of assembly, F-type ATPases have 2 components, F(1) - the catalytic core - and F(0) - the membrane proton channel. F(1) has five subunits: alpha(3), beta(3), gamma(1), delta(1), epsilon(1). F(0) has three main subunits: a(1), b(2) and c(10-14). The alpha and beta chains form an alternating ring which encloses part of the gamma chain. F(1) is attached to F(0) by a central stalk formed by the gamma and epsilon chains, while a peripheral stalk is formed by the delta and b chains.

It is found in the cell membrane. F(1)F(0) ATP synthase produces ATP from ADP in the presence of a proton or sodium gradient. F-type ATPases consist of two structural domains, F(1) containing the extramembraneous catalytic core and F(0) containing the membrane proton channel, linked together by a central stalk and a peripheral stalk. During catalysis, ATP synthesis in the catalytic domain of F(1) is coupled via a rotary mechanism of the central stalk subunits to proton translocation. Its function is as follows. Component of the F(0) channel, it forms part of the peripheral stalk, linking F(1) to F(0). The sequence is that of ATP synthase subunit b from Acholeplasma laidlawii (strain PG-8A).